The chain runs to 122 residues: Small ribosomal subunit protein uS13 (122 aa).

Residues 95–122 (GLPVRGQRTKTNARTRKGPKKTIAGKKK) form a disordered region.

Belongs to the universal ribosomal protein uS13 family. In terms of assembly, part of the 30S ribosomal subunit. Forms a loose heterodimer with protein S19. Forms two bridges to the 50S subunit in the 70S ribosome.

Located at the top of the head of the 30S subunit, it contacts several helices of the 16S rRNA. In the 70S ribosome it contacts the 23S rRNA (bridge B1a) and protein L5 of the 50S subunit (bridge B1b), connecting the 2 subunits; these bridges are implicated in subunit movement. Contacts the tRNAs in the A and P-sites. The polypeptide is Small ribosomal subunit protein uS13 (Corynebacterium aurimucosum (strain ATCC 700975 / DSM 44827 / CIP 107346 / CN-1) (Corynebacterium nigricans)).